The chain runs to 242 residues: 2-amino-5-formylamino-6-ribosylaminopyrimidin-4(3H)-one 5'-monophosphate deformylase (242 aa).

4 residues coordinate Fe cation: Glu46, His48, Asp57, and His125.

It belongs to the creatininase superfamily. FAPy deformylase family. As to quaternary structure, homodimer. Fe(2+) serves as cofactor. The cofactor is Zn(2+).

The enzyme catalyses 2-amino-5-formylamino-6-(5-phospho-D-ribosylamino)pyrimidin-4(3H)-one + H2O = 2,5-diamino-6-(1-D-ribosylamino)pyrimidin-4(3H)-one 5'-phosphate + formate + H(+). Its pathway is cofactor biosynthesis; coenzyme F420 biosynthesis. The protein operates within cofactor biosynthesis; riboflavin biosynthesis. Functionally, catalyzes the hydrolysis of the formamide of 2-amino-5-formylamino-6-ribosylamino-4(3H)-pyrimidinone 5'-monophosphate (FAPy) to form 2,5-diamino-6-ribosylamino-4(3H)-pyrimidinone 5'-phosphate (APy). The chain is 2-amino-5-formylamino-6-ribosylaminopyrimidin-4(3H)-one 5'-monophosphate deformylase from Methanococcus aeolicus (strain ATCC BAA-1280 / DSM 17508 / OCM 812 / Nankai-3).